A 197-amino-acid chain; its full sequence is Probable molybdenum cofactor guanylyltransferase (197 aa).

GTP contacts are provided by residues 6–8 (LAG), Lys-18, Asp-65, and Asp-97. Position 97 (Asp-97) interacts with Mg(2+).

The protein belongs to the MobA family. The cofactor is Mg(2+).

It localises to the cytoplasm. The catalysed reaction is Mo-molybdopterin + GTP + H(+) = Mo-molybdopterin guanine dinucleotide + diphosphate. Transfers a GMP moiety from GTP to Mo-molybdopterin (Mo-MPT) cofactor (Moco or molybdenum cofactor) to form Mo-molybdopterin guanine dinucleotide (Mo-MGD) cofactor. In Staphylococcus carnosus (strain TM300), this protein is Probable molybdenum cofactor guanylyltransferase.